Here is a 250-residue protein sequence, read N- to C-terminus: Probable transcriptional regulatory protein ckrop_1032 (250 aa).

The tract at residues 1–22 (MSGHSKWATTKHKKAANDAKRG) is disordered.

It belongs to the TACO1 family.

It localises to the cytoplasm. This Corynebacterium kroppenstedtii (strain DSM 44385 / JCM 11950 / CIP 105744 / CCUG 35717) protein is Probable transcriptional regulatory protein ckrop_1032.